The primary structure comprises 433 residues: Homogentisate 1,2-dioxygenase (433 aa).

The active-site Proton acceptor is the H288. The Fe cation site is built by H331 and E337. The homogentisate site is built by Y346 and H367. Residue H367 coordinates Fe cation.

The protein belongs to the homogentisate dioxygenase family. As to quaternary structure, hexamer; dimer of trimers. Fe cation serves as cofactor.

The enzyme catalyses homogentisate + O2 = 4-maleylacetoacetate + H(+). The protein operates within amino-acid degradation; L-phenylalanine degradation; acetoacetate and fumarate from L-phenylalanine: step 4/6. Involved in the catabolism of homogentisate (2,5-dihydroxyphenylacetate or 2,5-OH-PhAc), a central intermediate in the degradation of phenylalanine and tyrosine. Catalyzes the oxidative ring cleavage of the aromatic ring of homogentisate to yield maleylacetoacetate. The protein is Homogentisate 1,2-dioxygenase of Pseudomonas putida (strain ATCC 700007 / DSM 6899 / JCM 31910 / BCRC 17059 / LMG 24140 / F1).